Here is a 99-residue protein sequence, read N- to C-terminus: MSRRCAVTGKGVQTGNNVSHSNIKSRRRFLPNLQVNSLMSDLLREPVRMRLSAHGLRTVEHRGGIDAFLLSTPSVELTVELRKVKRRMVKIRDAAAAAA.

The protein belongs to the bacterial ribosomal protein bL28 family.

This chain is Large ribosomal subunit protein bL28, found in Rhodospirillum rubrum (strain ATCC 11170 / ATH 1.1.1 / DSM 467 / LMG 4362 / NCIMB 8255 / S1).